Here is a 403-residue protein sequence, read N- to C-terminus: Serine/threonine transporter SstT (403 aa).

9 consecutive transmembrane segments (helical) span residues 16–36 (QIVI…AIAL), 45–65 (FVSA…MASI), 79–99 (ILWL…VASM), 138–158 (ALLN…GVAL), 175–195 (GVTL…FGLV), 214–234 (LAVL…LIVF), 295–315 (MAGA…TLGI), 327–347 (MVAA…LLLI), and 353–373 (LFGI…IIGV).

Belongs to the dicarboxylate/amino acid:cation symporter (DAACS) (TC 2.A.23) family.

Its subcellular location is the cell inner membrane. It carries out the reaction L-serine(in) + Na(+)(in) = L-serine(out) + Na(+)(out). The enzyme catalyses L-threonine(in) + Na(+)(in) = L-threonine(out) + Na(+)(out). Functionally, involved in the import of serine and threonine into the cell, with the concomitant import of sodium (symport system). This chain is Serine/threonine transporter SstT, found in Pseudomonas putida (strain W619).